Consider the following 86-residue polypeptide: MANIKSQIKRNLTNEKRHQANVSFKSSYKTAVKAVEKAVEAKDKDLALAKLSFAHKKLDKGQAKGIFHKNFVARNKSALARLVNSL.

Residues 1 to 11 show a composition bias toward polar residues; the sequence is MANIKSQIKRN. The tract at residues 1–20 is disordered; the sequence is MANIKSQIKRNLTNEKRHQA.

The protein belongs to the bacterial ribosomal protein bS20 family.

Binds directly to 16S ribosomal RNA. This is Small ribosomal subunit protein bS20 from Acholeplasma laidlawii (strain PG-8A).